A 908-amino-acid polypeptide reads, in one-letter code: 3-phosphoinositide-dependent protein kinase B (908 aa).

Low complexity-rich tracts occupy residues 53-170 (NNNF…SSSL), 179-189 (YSDSSDSIDSY), and 200-216 (QQQQ…QPLH). Positions 53–267 (NNNFNNNNNN…PNSSIPHKKS (215 aa)) are disordered. Over residues 250 to 262 (KTSSFGLQPNSSI) the composition is skewed to polar residues. The region spanning 271–527 (FDFIRTIGKG…ISEIKNHEFF (257 aa)) is the Protein kinase domain. ATP contacts are provided by residues 281–283 (AYG) and Lys300. Residues 302 to 346 (LNKKLIIKEKKAKYVNTEKTILDSLDNPNIVKLFYTFQDENNLYF) are PIF-pocket. Residues 349–351 (EYC) and Asp355 each bind ATP. Asp394 serves as the catalytic Proton acceptor. ATP is bound by residues Glu398 and Asp412. 2 disordered regions span residues 538 to 560 (SQTP…NSSL) and 606 to 755 (ISNN…KNLQ). Over residues 607-684 (SNNNNNNNNT…PAYSSTPSST (78 aa)) the composition is skewed to low complexity. Residues 696–709 (SSCSSNNLLGKSSN) show a composition bias toward polar residues. The segment covering 710–741 (QQYQPFQFHQQQQQQQQQQQRERSSTTTPSPT) has biased composition (low complexity). Residues 764-902 (SSFSTSSPMS…KLWVDLINEL (139 aa)) enclose the PH domain.

It belongs to the protein kinase superfamily. AGC Ser/Thr protein kinase family. PDPK1 subfamily.

The catalysed reaction is L-seryl-[protein] + ATP = O-phospho-L-seryl-[protein] + ADP + H(+). It carries out the reaction L-threonyl-[protein] + ATP = O-phospho-L-threonyl-[protein] + ADP + H(+). The chain is 3-phosphoinositide-dependent protein kinase B (pdkB) from Dictyostelium discoideum (Social amoeba).